The chain runs to 300 residues: 4-hydroxy-tetrahydrodipicolinate synthase (300 aa).

T56 serves as a coordination point for pyruvate. Y145 serves as the catalytic Proton donor/acceptor. The active-site Schiff-base intermediate with substrate is the K173. V215 lines the pyruvate pocket.

This sequence belongs to the DapA family. In terms of assembly, homotetramer; dimer of dimers.

It localises to the cytoplasm. It carries out the reaction L-aspartate 4-semialdehyde + pyruvate = (2S,4S)-4-hydroxy-2,3,4,5-tetrahydrodipicolinate + H2O + H(+). It participates in amino-acid biosynthesis; L-lysine biosynthesis via DAP pathway; (S)-tetrahydrodipicolinate from L-aspartate: step 3/4. In terms of biological role, catalyzes the condensation of (S)-aspartate-beta-semialdehyde [(S)-ASA] and pyruvate to 4-hydroxy-tetrahydrodipicolinate (HTPA). This Prochlorococcus marinus (strain AS9601) protein is 4-hydroxy-tetrahydrodipicolinate synthase.